Here is a 119-residue protein sequence, read N- to C-terminus: NADH-quinone oxidoreductase subunit A (119 aa).

3 helical membrane passes run 7 to 27, 63 to 83, and 88 to 108; these read FPVLLFLIVGTGLGVALVSIG, LVAILFIIFDLETAFLFPWGV, and IGWPGFMAMMIFLLEFLLGFA.

It belongs to the complex I subunit 3 family. NDH-1 is composed of 14 different subunits. Subunits NuoA, H, J, K, L, M, N constitute the membrane sector of the complex.

The protein resides in the cell inner membrane. The enzyme catalyses a quinone + NADH + 5 H(+)(in) = a quinol + NAD(+) + 4 H(+)(out). NDH-1 shuttles electrons from NADH, via FMN and iron-sulfur (Fe-S) centers, to quinones in the respiratory chain. The immediate electron acceptor for the enzyme in this species is believed to be ubiquinone. Couples the redox reaction to proton translocation (for every two electrons transferred, four hydrogen ions are translocated across the cytoplasmic membrane), and thus conserves the redox energy in a proton gradient. In Paraburkholderia xenovorans (strain LB400), this protein is NADH-quinone oxidoreductase subunit A.